We begin with the raw amino-acid sequence, 387 residues long: 1-deoxy-D-xylulose 5-phosphate reductoisomerase (387 aa).

Residues T10, G11, I13, N38, and N122 each coordinate NADPH. Residue K123 coordinates 1-deoxy-D-xylulose 5-phosphate. Position 124 (E124) interacts with NADPH. Residue D148 coordinates Mn(2+). 1-deoxy-D-xylulose 5-phosphate is bound by residues S149, E150, S174, and H197. E150 is a Mn(2+) binding site. G203 lines the NADPH pocket. 1-deoxy-D-xylulose 5-phosphate-binding residues include S210, N215, K216, and E219. E219 is a binding site for Mn(2+).

The protein belongs to the DXR family. The cofactor is Mg(2+). Mn(2+) serves as cofactor.

The catalysed reaction is 2-C-methyl-D-erythritol 4-phosphate + NADP(+) = 1-deoxy-D-xylulose 5-phosphate + NADPH + H(+). It functions in the pathway isoprenoid biosynthesis; isopentenyl diphosphate biosynthesis via DXP pathway; isopentenyl diphosphate from 1-deoxy-D-xylulose 5-phosphate: step 1/6. Catalyzes the NADPH-dependent rearrangement and reduction of 1-deoxy-D-xylulose-5-phosphate (DXP) to 2-C-methyl-D-erythritol 4-phosphate (MEP). In Ehrlichia ruminantium (strain Welgevonden), this protein is 1-deoxy-D-xylulose 5-phosphate reductoisomerase.